Here is a 432-residue protein sequence, read N- to C-terminus: MERATVRLLRGGALLRRNFPSCLSSWKTPPHALNSSQSEAQLKATSNGPPLAPLQTFTDEEMMIKSAVKKFAQEQVAPFVSKMDEDSKMEKSVIQGLFQQGLMGIEIDTKYGGTGASFFSSVLVIEELAKVDASVALVCDIQNTLINRMIGKYGTEEQKATYLPKLATEKASSICISETGAGSDSFAMKTRADKKGDYYIINGSKMWISSAEIAGLFVVMANADFSAGYKGITCFLVDGDTEGLHVGKPENKLGIRASSTCPVTFENVKVPKTNILGQVGHGYKYAIGSLNEGRIGIAAQMLGVAQGCFDYTIPYIKERKQFGRRVFDFQGLQHQVAHMATQLEAARLLTYNAARLLEAGRPMIKEASMAKYHASELAGLITSKCIEWMGGVGYTKSYPVEKYFRDAKIGTIYEGTSNIQLNTIAKCISAEY.

The transit peptide at 1-33 (MERATVRLLRGGALLRRNFPSCLSSWKTPPHAL) directs the protein to the mitochondrion. At K70 the chain carries N6-acetyllysine; alternate. The residue at position 70 (K70) is an N6-succinyllysine; alternate. Residues 174 to 183 (ICISETGAGS) and 207 to 209 (WIS) each bind FAD. S183 lines the substrate pocket. S183 is modified (phosphoserine). Residues Y229 and Y283 each coordinate substrate. K284 is subject to N6-acetyllysine; alternate. N6-succinyllysine; alternate is present on K284. 291 to 294 (NEGR) contacts substrate. FAD contacts are provided by residues R319, Q330, and 387 to 391 (EWMGG). E414 (proton acceptor) is an active-site residue. An FAD-binding site is contributed by 416-418 (TSN). K426 is modified (N6-acetyllysine).

This sequence belongs to the acyl-CoA dehydrogenase family. Homotetramer. It depends on FAD as a cofactor.

The protein localises to the mitochondrion matrix. The catalysed reaction is 2-methylbutanoyl-CoA + oxidized [electron-transfer flavoprotein] + H(+) = (2E)-2-methylbut-2-enoyl-CoA + reduced [electron-transfer flavoprotein]. The enzyme catalyses (2S)-2-methylbutanoyl-CoA + oxidized [electron-transfer flavoprotein] + H(+) = (2E)-2-methylbut-2-enoyl-CoA + reduced [electron-transfer flavoprotein]. It catalyses the reaction (2R)-2-methylbutanoyl-CoA + oxidized [electron-transfer flavoprotein] + H(+) = ethylacryloyl-CoA + reduced [electron-transfer flavoprotein]. It carries out the reaction butanoyl-CoA + oxidized [electron-transfer flavoprotein] + H(+) = (2E)-butenoyl-CoA + reduced [electron-transfer flavoprotein]. The catalysed reaction is 2-methylpropanoyl-CoA + oxidized [electron-transfer flavoprotein] + H(+) = 2-methylpropenoyl-CoA + reduced [electron-transfer flavoprotein]. The enzyme catalyses hexanoyl-CoA + oxidized [electron-transfer flavoprotein] + H(+) = (2E)-hexenoyl-CoA + reduced [electron-transfer flavoprotein]. It catalyses the reaction valproyl-CoA + oxidized [electron-transfer flavoprotein] + H(+) = (2E)-2-propylpent-2-enoyl-CoA + reduced [electron-transfer flavoprotein]. It participates in lipid metabolism; mitochondrial fatty acid beta-oxidation. It functions in the pathway amino-acid degradation; L-isoleucine degradation. In terms of biological role, short and branched chain specific acyl-CoA dehydrogenase that catalyzes the removal of one hydrogen from C-2 and C-3 of the fatty acyl-CoA thioester, resulting in the formation of trans-2-enoyl-CoA. Among the different mitochondrial acyl-CoA dehydrogenases, acts specifically on short and branched chain acyl-CoA derivatives such as (S)-2-methylbutyryl-CoA as well as short straight chain acyl-CoAs such as butyryl-CoA. Plays an important role in the metabolism of L-isoleucine by catalyzing the dehydrogenation of 2-methylbutyryl-CoA, one of the steps of the L-isoleucine catabolic pathway. Can also act on valproyl-CoA, a metabolite of the valproic acid drug. This chain is Short/branched chain specific acyl-CoA dehydrogenase, mitochondrial (ACADSB), found in Bos taurus (Bovine).